The primary structure comprises 1039 residues: Alpha-mannosidase 2C1 (1039 aa).

4 residues coordinate Co(2+): H259, D261, D371, and H576. Residue D371 is the Nucleophile of the active site.

This sequence belongs to the glycosyl hydrolase 38 family. It depends on Co(2+) as a cofactor. Expressed in kidney and liver (at protein level). Widely expressed, with highest levels in lung, ovary and testis. Also detected at lower levels in heart, brain, liver, spleen, kidney and thymus.

Its subcellular location is the cytoplasm. It catalyses the reaction Hydrolysis of terminal, non-reducing alpha-D-mannose residues in alpha-D-mannosides.. With respect to regulation, inhibited by 1,4-dideoxy-1,4-imino-d-mannitol (DIM) and EDTA. Functionally, cleaves alpha 1,2-, alpha 1,3-, and alpha 1,6-linked mannose residues from glycoproteins. Involved in the degradation of free oligosaccharides in the cytoplasm. In Mus musculus (Mouse), this protein is Alpha-mannosidase 2C1.